Here is a 205-residue protein sequence, read N- to C-terminus: MKNLFLTSSFKDVVPLFTEFESNLQGKTVTFIPTASTVEEVTFYVEAGKKALESLGLLVEELDIATESLGEITTKLRKNDFIYVTGGNTFFLLQELKRTGADKLILEEIAAGKLYIGESAGAVITSPNIAYIQTMDSTKKAVNLTNYDALNLVDFSTLPHYNNTPFKEITQKIVTEYAGKSQIYPISNHEAIFIRGKEVITKRLS.

Residues Ser-119 and His-160 each act as charge relay system in the active site.

It belongs to the peptidase S51 family.

This is an uncharacterized protein from Listeria monocytogenes serovar 1/2a (strain ATCC BAA-679 / EGD-e).